The chain runs to 218 residues: Kynurenine formamidase (218 aa).

Substrate is bound at residue Trp27. Residues His57, His61, and Asp63 each coordinate Zn(2+). His67 (proton donor/acceptor) is an active-site residue. Zn(2+) is bound by residues His169 and Glu181.

This sequence belongs to the Cyclase 1 superfamily. KynB family. As to quaternary structure, homodimer. Zn(2+) serves as cofactor.

It catalyses the reaction N-formyl-L-kynurenine + H2O = L-kynurenine + formate + H(+). Its pathway is amino-acid degradation; L-tryptophan degradation via kynurenine pathway; L-kynurenine from L-tryptophan: step 2/2. Inhibited by EDTA. Insensitive to phenylmethylsulfonyl fluoride (PMSF). Its function is as follows. Catalyzes the hydrolysis of N-formyl-L-kynurenine to L-kynurenine, the second step in the kynurenine pathway of tryptophan degradation. The polypeptide is Kynurenine formamidase (Cupriavidus metallidurans (strain ATCC 43123 / DSM 2839 / NBRC 102507 / CH34) (Ralstonia metallidurans)).